A 309-amino-acid polypeptide reads, in one-letter code: GATA transcription factor 25 (309 aa).

The interval Met1 to Pro35 is disordered. Over residues Ile8–Ala18 the composition is skewed to polar residues. A Tify domain is found at Pro77–Gly112. The 43-residue stretch at Arg146–Ser188 folds into the CCT domain. Polar residues predominate over residues Ser187 to Asp202. The segment at Ser187–Asp207 is disordered. The GATA-type zinc finger occupies Ala208–Lys267. Positions Glu290–His309 are disordered. Residues Ser293–His309 show a composition bias toward polar residues.

This sequence belongs to the type IV zinc-finger family. Class C subfamily. Predominantly expressed in shoot apices, inflorescences and roots.

It localises to the nucleus. Its function is as follows. Transcriptional activator that specifically binds 5'-GATA-3' or 5'-GAT-3' motifs within gene promoters. The protein is GATA transcription factor 25 (GATA25) of Arabidopsis thaliana (Mouse-ear cress).